The chain runs to 403 residues: Aurora kinase A (403 aa).

Residues 1–125 are disordered; it reads MDRSKENCIS…SKQKNEESKK (125 aa). Polar residues-rich tracts occupy residues 27–83 and 91–101; these read VTQQ…QATS and PLNNTQKSKQP. Residues serine 41 and serine 51 each carry the phosphoserine modification. Residues 114 to 125 show a composition bias toward basic and acidic residues; the sequence is LASKQKNEESKK. The Protein kinase domain maps to 133–383; it reads FEIGRPLGKG…LREVLEHPWI (251 aa). ATP is bound by residues lysine 143, lysine 162, and 211-213; that span reads EYA. Aspartate 256 (proton acceptor) is an active-site residue. Residue lysine 258 forms a Glycyl lysine isopeptide (Lys-Gly) (interchain with G-Cter in SUMO2) linkage. ATP contacts are provided by residues 260–261 and aspartate 274; that span reads EN. Residues 280-293 are activation segment; it reads HAPSSRRTTLCGTL. Phosphothreonine occurs at positions 287 and 288. Serine 342 carries the post-translational modification Phosphoserine; by PKA and PAK.

Belongs to the protein kinase superfamily. Ser/Thr protein kinase family. Aurora subfamily. In terms of assembly, part of a complex composed of NEDD9, AURKA and CTTN; within the complex NEDD9 acts as a scaffold protein and is required for complex formation. Identified in a complex with AUNIP and NIN. Interacts with FBXL7. Interacts with CPEB1, JTB, TACC1, TPX2, PPP2CA, as well as with the protein phosphatase type 1 (PP1) isoforms PPP1CA, PPP1CB and PPP1CC. Also interacts with its substrates ARHGEF2, BORA, KIF2A, PARD3, and p53/TP53. Interaction with BORA promotes phosphorylation of PLK1. Interacts with CIMAP3. Interacts with GADD45A, competing with its oligomerization. Interacts (via C-terminus) with AUNIP (via C-terminus). Interacts with FRY; this interaction facilitates AURKA-mediated PLK1 phosphorylation. Interacts with SIRT2. Interacts with MYCN; interaction is phospho-independent and triggers AURKA activation; AURKA competes with FBXW7 for binding to unphosphorylated MYCN but not for binding to phosphorylated MYCN. Interacts with HNRNPU. Interacts with AAAS. Interacts with KLHL18 and CUL3. Interacts with FOXP1. Interacts with HDAC6; AURKA-mediated phosphorylation of HDAC6 promotes deacetylation of alpha-tubulin. Activated by phosphorylation at Thr-288; this brings about a change in the conformation of the activation segment. Phosphorylation at Thr-288 varies during the cell cycle and is highest during M phase. Autophosphorylated at Thr-288 upon TPX2 binding. Thr-288 can be phosphorylated by several kinases, including PAK and PKA. Protein phosphatase type 1 (PP1) binds AURKA and inhibits its activity by dephosphorylating Thr-288 during mitosis. Phosphorylation at Ser-342 decreases the kinase activity. PPP2CA controls degradation by dephosphorylating Ser-51 at the end of mitosis. In terms of processing, ubiquitinated by the E3 ubiquitin-protein ligase complex SCF(FBXL7) during mitosis, leading to its degradation by the proteasome. Ubiquitinated by CHFR, leading to its degradation by the proteasome. Ubiquitinated by the anaphase-promoting complex (APC), leading to its degradation by the proteasome. Ubiquitinated by the CUL3-KLHL18 ligase leading to its activation at the centrosome which is required for initiating mitotic entry. Ubiquitination mediated by CUL3-KLHL18 ligase does not lead to its degradation by the proteasome. In terms of tissue distribution, highly expressed in testis and weakly in skeletal muscle, thymus and spleen. Also highly expressed in colon, ovarian, prostate, neuroblastoma, breast and cervical cancer cell lines.

Its subcellular location is the cytoplasm. The protein resides in the cytoskeleton. It localises to the microtubule organizing center. The protein localises to the centrosome. It is found in the spindle pole. Its subcellular location is the centriole. The protein resides in the cell projection. It localises to the neuron projection. The protein localises to the cilium. It is found in the cilium basal body. Its subcellular location is the basolateral cell membrane. The enzyme catalyses L-seryl-[protein] + ATP = O-phospho-L-seryl-[protein] + ADP + H(+). It catalyses the reaction L-threonyl-[protein] + ATP = O-phospho-L-threonyl-[protein] + ADP + H(+). With respect to regulation, activation of CDK1, appears to be an upstream event of AURKA activation. Phosphatase inhibitor-2 (PPP1R2) and TPX2 act also as activators. Inactivated by the G2 checkpoint. Inhibited by GADD45A and p53/TP53, and through dephosphorylation by protein phosphatase type 1 (PP1). MLN8054 is also a potent and selective inhibitor. Activated during the early phase of cilia disassembly in the presence of CIMAP3. Inhibited by the small molecule inhibitor VX-680. In terms of biological role, mitotic serine/threonine kinase that contributes to the regulation of cell cycle progression. Associates with the centrosome and the spindle microtubules during mitosis and plays a critical role in various mitotic events including the establishment of mitotic spindle, centrosome duplication, centrosome separation as well as maturation, chromosomal alignment, spindle assembly checkpoint, and cytokinesis. Required for normal spindle positioning during mitosis and for the localization of NUMA1 and DCTN1 to the cell cortex during metaphase. Required for initial activation of CDK1 at centrosomes. Phosphorylates numerous target proteins, including ARHGEF2, BORA, BRCA1, CDC25B, DLGP5, HDAC6, KIF2A, LATS2, NDEL1, PARD3, PPP1R2, PLK1, RASSF1, TACC3, p53/TP53 and TPX2. Phosphorylates MCRS1 which is required for MCRS1-mediated kinetochore fiber assembly and mitotic progression. Regulates KIF2A tubulin depolymerase activity. Important for microtubule formation and/or stabilization. Required for normal axon formation. Plays a role in microtubule remodeling during neurite extension. Also acts as a key regulatory component of the p53/TP53 pathway, and particularly the checkpoint-response pathways critical for oncogenic transformation of cells, by phosphorylating and destabilizing p53/TP53. Phosphorylates its own inhibitors, the protein phosphatase type 1 (PP1) isoforms, to inhibit their activity. Inhibits cilia outgrowth. Required for cilia disassembly via phosphorylation of HDAC6 and subsequent deacetylation of alpha-tubulin. Regulates protein levels of the anti-apoptosis protein BIRC5 by suppressing the expression of the SCF(FBXL7) E3 ubiquitin-protein ligase substrate adapter FBXL7 through the phosphorylation of the transcription factor FOXP1. The chain is Aurora kinase A from Homo sapiens (Human).